We begin with the raw amino-acid sequence, 407 residues long: 1-deoxy-D-xylulose 5-phosphate reductoisomerase (407 aa).

Residues Thr-10, Gly-11, Ser-12, Ile-13, Gly-36, and Asn-131 each contribute to the NADPH site. Residue Lys-132 coordinates 1-deoxy-D-xylulose 5-phosphate. Glu-133 serves as a coordination point for NADPH. Residue Asp-155 coordinates Mn(2+). Positions 156, 157, 181, and 204 each coordinate 1-deoxy-D-xylulose 5-phosphate. Residue Glu-157 participates in Mn(2+) binding. An NADPH-binding site is contributed by Gly-210. 1-deoxy-D-xylulose 5-phosphate contacts are provided by Ser-217, Asn-222, Lys-223, and Glu-226. Mn(2+) is bound at residue Glu-226.

The protein belongs to the DXR family. Mg(2+) serves as cofactor. Requires Mn(2+) as cofactor.

It carries out the reaction 2-C-methyl-D-erythritol 4-phosphate + NADP(+) = 1-deoxy-D-xylulose 5-phosphate + NADPH + H(+). Its pathway is isoprenoid biosynthesis; isopentenyl diphosphate biosynthesis via DXP pathway; isopentenyl diphosphate from 1-deoxy-D-xylulose 5-phosphate: step 1/6. Catalyzes the NADPH-dependent rearrangement and reduction of 1-deoxy-D-xylulose-5-phosphate (DXP) to 2-C-methyl-D-erythritol 4-phosphate (MEP). This Cutibacterium acnes (strain DSM 16379 / KPA171202) (Propionibacterium acnes) protein is 1-deoxy-D-xylulose 5-phosphate reductoisomerase.